A 378-amino-acid chain; its full sequence is TelA-like protein SAB1262 (378 aa).

Belongs to the TelA family.

The protein is TelA-like protein SAB1262 of Staphylococcus aureus (strain bovine RF122 / ET3-1).